A 290-amino-acid polypeptide reads, in one-letter code: Protein translocase subunit SecF (290 aa).

6 helical membrane passes run Val-15 to Gly-35, Lys-131 to Phe-151, Ala-156 to Ile-176, Ser-184 to Phe-204, Thr-234 to Leu-256, and Ile-260 to Leu-282.

Belongs to the SecD/SecF family. SecF subfamily. As to quaternary structure, forms a complex with SecD. Part of the essential Sec protein translocation apparatus which comprises SecA, SecYEG and auxiliary proteins SecDF. Other proteins may also be involved.

The protein resides in the cell inner membrane. Part of the Sec protein translocase complex. Interacts with the SecYEG preprotein conducting channel. SecDF uses the proton motive force (PMF) to complete protein translocation after the ATP-dependent function of SecA. The chain is Protein translocase subunit SecF from Dictyoglomus turgidum (strain DSM 6724 / Z-1310).